The sequence spans 218 residues: Capsid protein (218 aa).

Met-1 bears the N-acetylmethionine; by host mark. The disordered stretch occupies residues 1 to 28 (MDKSESTSAGRNRRRRPRRGSRSAPSSA). The segment covering 11-21 (RNRRRRPRRGS) has biased composition (basic residues).

This sequence belongs to the cucumovirus capsid protein family.

It localises to the virion. Functionally, capsid protein. Probably binds RNA and plays a role in packaging. This chain is Capsid protein, found in Cucumis sativus (Cucumber).